The primary structure comprises 417 residues: Glutamyl-tRNA reductase (417 aa).

Residues 49–52, serine 109, 114–116, and glutamine 120 each bind substrate; these read TCNR and ESQ. The Nucleophile role is filled by cysteine 50. An NADP(+)-binding site is contributed by 189–194; sequence GLGEIG.

It belongs to the glutamyl-tRNA reductase family. As to quaternary structure, homodimer.

It carries out the reaction (S)-4-amino-5-oxopentanoate + tRNA(Glu) + NADP(+) = L-glutamyl-tRNA(Glu) + NADPH + H(+). It participates in porphyrin-containing compound metabolism; protoporphyrin-IX biosynthesis; 5-aminolevulinate from L-glutamyl-tRNA(Glu): step 1/2. Functionally, catalyzes the NADPH-dependent reduction of glutamyl-tRNA(Glu) to glutamate 1-semialdehyde (GSA). This is Glutamyl-tRNA reductase from Streptococcus sanguinis (strain SK36).